Here is a 92-residue protein sequence, read N- to C-terminus: Small ribosomal subunit protein uS19c (92 aa).

The protein belongs to the universal ribosomal protein uS19 family.

It is found in the plastid. The protein localises to the chloroplast. Functionally, protein S19 forms a complex with S13 that binds strongly to the 16S ribosomal RNA. The sequence is that of Small ribosomal subunit protein uS19c (rps19) from Guillardia theta (Cryptophyte).